The sequence spans 749 residues: 5-methyltetrahydropteroyltriglutamate--homocysteine methyltransferase (749 aa).

Residues 18-21 (REWK) and Lys-112 each bind 5-methyltetrahydropteroyltri-L-glutamate. L-homocysteine contacts are provided by residues 420–422 (IGS) and Glu-473. Residues 420 to 422 (IGS) and Glu-473 each bind L-methionine. A 5-methyltetrahydropteroyltri-L-glutamate-binding site is contributed by Trp-550. L-homocysteine is bound at residue Asp-588. Asp-588 is a binding site for L-methionine. Glu-594 contacts 5-methyltetrahydropteroyltri-L-glutamate. Zn(2+) contacts are provided by His-630, Cys-632, and Glu-654. His-683 functions as the Proton donor in the catalytic mechanism. Cys-715 contacts Zn(2+).

It belongs to the vitamin-B12 independent methionine synthase family. It depends on Zn(2+) as a cofactor.

It catalyses the reaction 5-methyltetrahydropteroyltri-L-glutamate + L-homocysteine = tetrahydropteroyltri-L-glutamate + L-methionine. Its pathway is amino-acid biosynthesis; L-methionine biosynthesis via de novo pathway; L-methionine from L-homocysteine (MetE route): step 1/1. Catalyzes the transfer of a methyl group from 5-methyltetrahydrofolate to homocysteine resulting in methionine formation. This is 5-methyltetrahydropteroyltriglutamate--homocysteine methyltransferase from Staphylococcus haemolyticus (strain JCSC1435).